A 95-amino-acid polypeptide reads, in one-letter code: Protein TusB (95 aa).

Belongs to the DsrH/TusB family. As to quaternary structure, heterohexamer, formed by a dimer of trimers. The hexameric TusBCD complex contains 2 copies each of TusB, TusC and TusD. The TusBCD complex interacts with TusE.

It localises to the cytoplasm. Its function is as follows. Part of a sulfur-relay system required for 2-thiolation of 5-methylaminomethyl-2-thiouridine (mnm(5)s(2)U) at tRNA wobble positions. This Shigella dysenteriae serotype 1 (strain Sd197) protein is Protein TusB.